Here is a 491-residue protein sequence, read N- to C-terminus: Cobyric acid synthase (491 aa).

A GATase cobBQ-type domain is found at glutamine 250 to alanine 437. Catalysis depends on cysteine 331, which acts as the Nucleophile. Histidine 429 is an active-site residue.

The protein belongs to the CobB/CobQ family. CobQ subfamily.

It functions in the pathway cofactor biosynthesis; adenosylcobalamin biosynthesis. Functionally, catalyzes amidations at positions B, D, E, and G on adenosylcobyrinic A,C-diamide. NH(2) groups are provided by glutamine, and one molecule of ATP is hydrogenolyzed for each amidation. This Xanthomonas axonopodis pv. citri (strain 306) protein is Cobyric acid synthase.